Here is a 554-residue protein sequence, read N- to C-terminus: (+)-delta-cadinene synthase isozyme XC1 (554 aa).

The span at 1 to 16 (MASQVSQMPSSSPLSS) shows a compositional bias: low complexity. The disordered stretch occupies residues 1 to 23 (MASQVSQMPSSSPLSSNKDEMRP). 4 residues coordinate Mg(2+): aspartate 307, aspartate 311, aspartate 451, and glutamate 455. A DDXXD motif motif is present at residues 307-311 (DDTYD).

The protein belongs to the terpene synthase family. Requires Mg(2+) as cofactor.

The enzyme catalyses (2E,6E)-farnesyl diphosphate = (1S,8aR)-delta-cadinene + diphosphate. It participates in secondary metabolite biosynthesis; terpenoid biosynthesis. Responsible for the cyclization of trans,trans-farnesyl diphosphate (FPP) to (+)-delta cadinene. This chain is (+)-delta-cadinene synthase isozyme XC1, found in Gossypium arboreum (Tree cotton).